The primary structure comprises 251 residues: uncharacterized protein (251 aa).

Helical transmembrane passes span 56 to 76 (LAVV…TLVA), 104 to 124 (IITV…FLLT), 184 to 204 (HGFV…LIIV), and 208 to 228 (YLIA…ANIS).

The protein resides in the membrane. This is an uncharacterized protein from Caenorhabditis elegans.